We begin with the raw amino-acid sequence, 833 residues long: MSFYNHKEIEPKWQGYWAEHHTFKTGTDASKPKFYALDMFPYPSGVGLHVGHPEGYTATDILSRYKRAQGYNVLHPMGWDAFGLPAEQYAMDTGNDPAEFTAENIANFKRQINALGFSYDWDREVNTTDPNYYKWTQWIFTKLYEKGLAYEAEVPVNWVEELGTAIANEEVLPDGTSERGGYPVVRKPMRQWMLKITAYAERLLNDLDELDWSESIKDMQRNWIGKSTGANVTFKVKGTDKEFTVFTTRPDTLFGATFTVLAPEHELVDAITSSEQAEAVADYKHQASLKSDLVRTDLAKEKTGVWTGAYAINPVNGKEMPIWIADYVLASYGTGAVMAVPAHDQRDWEFAKQFDLPIVEVLEGGNVEEAAYTEDGLHVNSDFLDGLNKEDAIAKIVACLEEKGCGQEKVTYRLRDWLFSRQRYWGEPIPIIHWEDGTSTAVPETELPLVLPVTKDIRPSGTGESPLANLTDWLEVTREDGVKGRRETNTMPQWAGSSWYYLRYIDPHNTEKLADEDLLKQWLPVDIYVGGAEHAVLHLLYARFWHKFLYDLGVVPTKEPFQKLFNQGMILGTSYRDHRGALVATDKVEKRDGSFFHIETGEELEQAPAKMSKSLKNVVNPDDVVEQYGADTLRVYEMFMGPLDASIAWSEEGLEGSRKFLDRVYRLITSKEILAENNGALDKAYNETVKAVTEQIESLKFNTAIAQLMVFVNAANKEDKLYVDYAKGFIQLIAPFAPHLAEELWQTVAETGESISYVAWPTWDESKLVEDEIEIVVQIKGKVRAKLMVAKDLSREELQEIALADEKVKAEIDGKEIVKVISVPNKLVNIVVK.

The 'HIGH' region signature appears at 41–52; the sequence is PYPSGVGLHVGH. The 'KMSKS' region motif lies at 610–614; it reads KMSKS. K613 is a binding site for ATP.

This sequence belongs to the class-I aminoacyl-tRNA synthetase family.

The protein resides in the cytoplasm. The catalysed reaction is tRNA(Leu) + L-leucine + ATP = L-leucyl-tRNA(Leu) + AMP + diphosphate. The chain is Leucine--tRNA ligase from Streptococcus pneumoniae serotype 2 (strain D39 / NCTC 7466).